Here is a 666-residue protein sequence, read N- to C-terminus: tRNA 5-methylaminomethyl-2-thiouridine biosynthesis bifunctional protein MnmC (666 aa).

The segment at 1-253 is tRNA (mnm(5)s(2)U34)-methyltransferase; the sequence is MSSPFVPIIT…KRHMICAHYE (253 aa). Positions 283–666 are FAD-dependent cmnm(5)s(2)U34 oxidoreductase; that stretch reads VGGGLAGCFI…FLRKKIIQGP (384 aa).

The protein in the N-terminal section; belongs to the methyltransferase superfamily. tRNA (mnm(5)s(2)U34)-methyltransferase family. It in the C-terminal section; belongs to the DAO family. FAD serves as cofactor.

The protein localises to the cytoplasm. It carries out the reaction 5-aminomethyl-2-thiouridine(34) in tRNA + S-adenosyl-L-methionine = 5-methylaminomethyl-2-thiouridine(34) in tRNA + S-adenosyl-L-homocysteine + H(+). In terms of biological role, catalyzes the last two steps in the biosynthesis of 5-methylaminomethyl-2-thiouridine (mnm(5)s(2)U) at the wobble position (U34) in tRNA. Catalyzes the FAD-dependent demodification of cmnm(5)s(2)U34 to nm(5)s(2)U34, followed by the transfer of a methyl group from S-adenosyl-L-methionine to nm(5)s(2)U34, to form mnm(5)s(2)U34. This chain is tRNA 5-methylaminomethyl-2-thiouridine biosynthesis bifunctional protein MnmC, found in Legionella pneumophila (strain Lens).